The chain runs to 389 residues: Leucine aminopeptidase 1 (389 aa).

A signal peptide spans 1–18 (MKSAALLLPLYTAAFAAA). Positions 19–89 (AFHHEHAQAV…TLNHRINAES (71 aa)) are excised as a propeptide. N-linked (GlcNAc...) asparagine glycosylation is found at N99, N146, and N156. Zn(2+) is bound by residues H188, D207, E246, and D273. C322 and C326 are disulfide-bonded. Position 355 (H355) interacts with Zn(2+).

This sequence belongs to the peptidase M28 family. M28E subfamily. Monomer. Zn(2+) is required as a cofactor.

Its subcellular location is the secreted. Its function is as follows. Extracellular aminopeptidase that allows assimilation of proteinaceous substrates. The protein is Leucine aminopeptidase 1 (lap1) of Pyrenophora tritici-repentis (strain Pt-1C-BFP) (Wheat tan spot fungus).